The sequence spans 267 residues: Strigolactone esterase RMS3 (267 aa).

Ser-96 (nucleophile) is an active-site residue. Residues Asp-218 and His-247 contribute to the active site.

Belongs to the AB hydrolase superfamily.

The protein localises to the cytoplasm. It localises to the nucleus. Its function is as follows. Involved in strigolactone signaling pathway. Functions downstream of strigolactone synthesis, as a component of hormone signaling and as an enzyme that participates in the conversion of strigolactones to the bioactive form. Binds and hydrolyzes the synthetic strigolactone analog GR24 and its enantiomers in vitro. Forms a stable covalent complex with the D-ring of strigolactone, which is essential for hormone bioactivity. The D-ring is attached to His-247 of the catalytic triad. The hydrolysis of strigolactone into a covalently linked intermediate molecule is required to trigger strigolactone signaling. This mechanism defines RMS3 as a non-canonical hormone receptor with dual functions to generate and sense the active form of strigolactone. Strigolactones are hormones that inhibit tillering and shoot branching through the MAX-dependent pathway, contribute to the regulation of shoot architectural response to phosphate-limiting conditions and function as rhizosphere signal that stimulates hyphal branching of arbuscular mycorrhizal fungi and trigger seed germination of root parasitic weeds. The protein is Strigolactone esterase RMS3 of Pisum sativum (Garden pea).